Reading from the N-terminus, the 91-residue chain is Elongation factor 1-beta (91 aa).

Homodimer.

Functionally, promotes the exchange of GDP for GTP in EF-1-alpha/GDP, thus allowing the regeneration of EF-1-alpha/GTP that could then be used to form the ternary complex EF-1-alpha/GTP/AAtRNA. This Saccharolobus solfataricus (strain ATCC 35092 / DSM 1617 / JCM 11322 / P2) (Sulfolobus solfataricus) protein is Elongation factor 1-beta (ef1b).